An 898-amino-acid chain; its full sequence is Probable LRR receptor-like serine/threonine-protein kinase At4g20450 (898 aa).

The N-terminal stretch at 1-24 is a signal peptide; it reads MEGIHKLIFLALIWIFLITNIVDA. The Extracellular portion of the chain corresponds to 25–535; the sequence is QDQQGFISLD…TGPGNNKKKL (511 aa). Residues Asn40, Asn52, Asn98, Asn247, Asn253, Asn420, Asn443, Asn465, Asn484, and Asn489 are each glycosylated (N-linked (GlcNAc...) asparagine). LRR repeat units follow at residues 455–477, 479–501, and 505–526; these read QLQKLDLSNNNLTGKVPEFLAKM, LLTFINLSGNNLSGSIPQSLLNM, and GLITLLYNGNNLCLDPSCESET. A helical membrane pass occupies residues 536 to 556; it reads LVPILASAASVGIIIAVLLLV. Residues 557 to 898 are Cytoplasmic-facing; the sequence is NILLLRKKKP…FGPEHIPDAR (342 aa). Thr582 carries the post-translational modification Phosphothreonine. A Protein kinase domain is found at 591–864; that stretch reads NNFERPLGEG…QVANELQECL (274 aa). ATP-binding positions include 597 to 605 and Lys619; that span reads LGEGGFGVV. A Phosphotyrosine modification is found at Tyr664. Residue Asp716 is the Proton acceptor of the active site. Ser750 is subject to Phosphoserine. Thr751 is modified (phosphothreonine). Position 764 is a phosphotyrosine (Tyr764). Positions 864–898 are disordered; that stretch reads LLTENSRKGGRHDVDSKSSLEQSTSFGPEHIPDAR. A compositionally biased stretch (basic and acidic residues) spans 868 to 881; the sequence is NSRKGGRHDVDSKS.

This sequence belongs to the protein kinase superfamily. Ser/Thr protein kinase family.

The protein localises to the membrane. The catalysed reaction is L-seryl-[protein] + ATP = O-phospho-L-seryl-[protein] + ADP + H(+). It carries out the reaction L-threonyl-[protein] + ATP = O-phospho-L-threonyl-[protein] + ADP + H(+). This Arabidopsis thaliana (Mouse-ear cress) protein is Probable LRR receptor-like serine/threonine-protein kinase At4g20450.